The sequence spans 1265 residues: Topoisomerase 1-associated factor 1 (1265 aa).

A compositionally biased stretch (polar residues) spans 650 to 659 (DVNGNKNGQD). 3 disordered regions span residues 650–670 (DVNG…DAIS), 1019–1052 (GKQI…DDDT), and 1167–1226 (HLSL…DPPS). Residues 1026–1039 (TAKKRSAIKPKSRK) are compositionally biased toward basic residues. Low complexity-rich tracts occupy residues 1171–1188 (SPNN…LSSD) and 1201–1211 (SDSEYNSSNSS).

Belongs to the timeless family. As to quaternary structure, component of the fork protection complex (FPC) consisting of TOF1 and CSM3.

The protein localises to the nucleus. Forms a fork protection complex (FPC) with CSM3 and which is required for chromosome segregation during meiosis and DNA damage repair. FPC coordinates leading and lagging strand synthesis and moves with the replication fork. FPC stabilizes replication forks in a configuration that is recognized by replication checkpoint sensors. This is Topoisomerase 1-associated factor 1 (TOF1) from Eremothecium gossypii (strain ATCC 10895 / CBS 109.51 / FGSC 9923 / NRRL Y-1056) (Yeast).